Reading from the N-terminus, the 833-residue chain is Phosphatidylinositol-3-phosphatase myotubularin-2 (833 aa).

In terms of domain architecture, GRAM spans 42–109; sequence GSYSNLDCLL…VAIEKFNKLA (68 aa). A Myotubularin phosphatase domain is found at 181-647; sequence TNPKERLLNE…LAPTLWPQFH (467 aa). Substrate-binding positions include 329–332, 354–355, 440–446, and R486; these read NGAK, NI, and CSDGWDR. Residue C440 is the Phosphocysteine intermediate of the active site. The interval 503–530 is disordered; it reads QSSSARSFPSSPVRQSPGSAAAQSSSSS. Low complexity predominate over residues 504 to 530; sequence SSSARSFPSSPVRQSPGSAAAQSSSSS. Positions 660-717 form a coiled coil; the sequence is ETEDQCRAMTVKYSEMKKEKEEAERKVDELSSAMESLNEELLNERDISRAARESAKRA. The tract at residues 753-772 is disordered; it reads KCSHSIPQKQSEDNTTDVSE.

This sequence belongs to the protein-tyrosine phosphatase family. Non-receptor class myotubularin subfamily. As to expression, mostly expressed in flowers and roots, and, to a lower extent, in siliques and leaves.

Its subcellular location is the cytoplasm. It catalyses the reaction a 1,2-diacyl-sn-glycero-3-phospho-(1D-myo-inositol-3-phosphate) + H2O = a 1,2-diacyl-sn-glycero-3-phospho-(1D-myo-inositol) + phosphate. It carries out the reaction a 1,2-diacyl-sn-glycero-3-phospho-(1D-myo-inositol-3,5-bisphosphate) + H2O = a 1,2-diacyl-sn-glycero-3-phospho-(1D-myo-inositol-5-phosphate) + phosphate. Functionally, phosphatase with phosphoinositide 3'-phosphatase activity that can use phosphatidylinositol-3-phosphate (PtdIns3P) and phosphatidylinositol-3,5-diphosphate (PtdIns3,5P(2)) as substrates and produces phosphatidylinositol-5-phosphate (PtdIns5P); participates in pathway(s) that transfer gene regulatory signals to the nucleus. In Arabidopsis thaliana (Mouse-ear cress), this protein is Phosphatidylinositol-3-phosphatase myotubularin-2 (MTM2).